Reading from the N-terminus, the 322-residue chain is Undecaprenyl-phosphate 4-deoxy-4-formamido-L-arabinose transferase (322 aa).

At 1–235 (MFEIHPVKKV…TCLTTTPLRM (235 aa)) the chain is on the cytoplasmic side. A helical membrane pass occupies residues 236-256 (LSLLGSIIAIGGFSIAVLLVI). Topologically, residues 257 to 269 (LRLTFGPQWAAEG) are periplasmic. A helical membrane pass occupies residues 270–290 (VFMLFAVLFTFIGAQFIGMGL). Residues 291–322 (LGEYIGRIYTDVRARPRYFVQQVIRPSSKENE) lie on the Cytoplasmic side of the membrane.

This sequence belongs to the glycosyltransferase 2 family.

The protein localises to the cell inner membrane. The catalysed reaction is UDP-4-deoxy-4-formamido-beta-L-arabinose + di-trans,octa-cis-undecaprenyl phosphate = 4-deoxy-4-formamido-alpha-L-arabinopyranosyl di-trans,octa-cis-undecaprenyl phosphate + UDP. It functions in the pathway glycolipid biosynthesis; 4-amino-4-deoxy-alpha-L-arabinose undecaprenyl phosphate biosynthesis; 4-amino-4-deoxy-alpha-L-arabinose undecaprenyl phosphate from UDP-4-deoxy-4-formamido-beta-L-arabinose and undecaprenyl phosphate: step 1/2. The protein operates within bacterial outer membrane biogenesis; lipopolysaccharide biosynthesis. In terms of biological role, catalyzes the transfer of 4-deoxy-4-formamido-L-arabinose from UDP to undecaprenyl phosphate. The modified arabinose is attached to lipid A and is required for resistance to polymyxin and cationic antimicrobial peptides. This is Undecaprenyl-phosphate 4-deoxy-4-formamido-L-arabinose transferase from Escherichia coli O7:K1 (strain IAI39 / ExPEC).